The sequence spans 883 residues: Aryl hydrocarbon receptor (883 aa).

The propeptide occupies 1–9 (MSSGANITY). Residues 1–38 (MSSGANITYASRKRRKPVQKTVKPIPAEGIKSNPSKRH) form a disordered region. Short sequence motifs (nuclear localization signal) lie at residues 12 to 15 (RKRR) and 36 to 41 (KRHRDR). One can recognise a bHLH domain in the interval 26–79 (PAEGIKSNPSKRHRDRLNTELDRLASLLPFPQDVINKLDKLSVLRLSVSYLRAK). Positions 37–65 (RHRDRLNTELDRLASLLPFPQDVINKLDK) are DNA-binding. 3 required for maintaining the overall integrity of the AHR:ARNT heterodimer and its transcriptional activity regions span residues 49–81 (LASL…AKSF), 116–124 (LLQALNGFV), and 260–262 (FAI). Residues 63–71 (LDKLSVLRL) carry the Nuclear export signal motif. Residues 111 to 175 (QEGEFLLQAL…AEFQRQLHWA (65 aa)) form the PAS 1 domain. Residues 266–336 (LQPPSILEIR…CAESHIRMIK (71 aa)) enclose the PAS 2 domain. A PAC domain is found at 342–383 (MTVFRLLAKHSRWRWVQSNARLIYRNGRPDYIIATQRPLTDE). The disordered stretch occupies residues 421–449 (LPIRTKSNTSRKDWAPQSTPSKDSFHPSS). Positions 436-449 (PQSTPSKDSFHPSS) are enriched in polar residues.

Homodimer. Heterodimer; efficient DNA binding requires dimerization with another bHLH protein. Interacts with ARNT; the heterodimer ARNT:AHR binds to core DNA sequence 5'-TGCGTG-3' within the dioxin response element (DRE) of target gene promoters and activates their transcription. Binds MYBBP1A. Interacts with coactivators including SRC-1, RIP140 and NOCA7, and with the corepressor SMRT. Interacts with NEDD8 and IVNS1ABP. Interacts with BMAL1. Interacts with HSP90AB1. Interacts with TIPARP; leading to mono-ADP-ribosylation of AHR and subsequent inhibition of AHR. Mono-ADP-ribosylated, leading to inhibit transcription activator activity of AHR.

Its subcellular location is the cytoplasm. The protein localises to the nucleus. Its function is as follows. Ligand-activated transcription factor that enables cells to adapt to changing conditions by sensing compounds from the environment, diet, microbiome and cellular metabolism, and which plays important roles in development, immunity and cancer. Upon ligand binding, translocates into the nucleus, where it heterodimerizes with ARNT and induces transcription by binding to xenobiotic response elements (XRE). Regulates a variety of biological processes, including angiogenesis, hematopoiesis, drug and lipid metabolism, cell motility and immune modulation. Xenobiotics can act as ligands: upon xenobiotic-binding, activates the expression of multiple phase I and II xenobiotic chemical metabolizing enzyme genes (such as the CYP1A1 gene). Mediates biochemical and toxic effects of halogenated aromatic hydrocarbons. Next to xenobiotics, natural ligands derived from plants, microbiota, and endogenous metabolism are potent AHR agonists. Tryptophan (Trp) derivatives constitute an important class of endogenous AHR ligands. Acts as a negative regulator of anti-tumor immunity: indoles and kynurenic acid generated by Trp catabolism act as ligand and activate AHR, thereby promoting AHR-driven cancer cell motility and suppressing adaptive immunity. Regulates the circadian clock by inhibiting the basal and circadian expression of the core circadian component PER1. Inhibits PER1 by repressing the CLOCK-BMAL1 heterodimer mediated transcriptional activation of PER1. The heterodimer ARNT:AHR binds to core DNA sequence 5'-TGCGTG-3' within the dioxin response element (DRE) of target gene promoters and activates their transcription. This is Aryl hydrocarbon receptor (Ahr) from Mus musculus molossinus (Japanese house mouse).